The primary structure comprises 245 residues: Purine nucleoside phosphorylase (245 aa).

Histidine 8 provides a ligand contact to a purine D-ribonucleoside. Residues 24–28, arginine 46, and 89–92 contribute to the phosphate site; these read GDPGR and RAGS. 184–185 is a binding site for a purine D-ribonucleoside; it reads ME. The active-site Proton donor is the aspartate 207.

It belongs to the PNP/MTAP phosphorylase family. In terms of assembly, homohexamer; trimer of homodimers.

It catalyses the reaction inosine + phosphate = alpha-D-ribose 1-phosphate + hypoxanthine. The enzyme catalyses guanosine + phosphate = alpha-D-ribose 1-phosphate + guanine. It carries out the reaction 2'-deoxyguanosine + phosphate = 2-deoxy-alpha-D-ribose 1-phosphate + guanine. The catalysed reaction is 2'-deoxyinosine + phosphate = 2-deoxy-alpha-D-ribose 1-phosphate + hypoxanthine. It functions in the pathway purine metabolism; purine nucleoside salvage. As part of the purine salvage pathway, catalyzes the phosphorolytic breakdown of the N-glycosidic bond in the beta-(deoxy)ribonucleoside molecules, with the formation of the corresponding free purine bases and pentose-1-phosphate. Preferentially acts on inosine and guanosine, and to a lesser extent on 2'-deoxyinosine and 2'-deoxyguanosine. The chain is Purine nucleoside phosphorylase from Plasmodium vivax (strain Salvador I).